Consider the following 220-residue polypeptide: Large ribosomal subunit protein bL21 (220 aa).

Residues 109 to 158 are disordered; the sequence is SKKVAAKPATSEEKAAEEKPAKAKKEAAEKGASPRETKAAPLFSAPEGEP. The segment covering 118–146 has biased composition (basic and acidic residues); sequence TSEEKAAEEKPAKAKKEAAEKGASPRETK.

Belongs to the bacterial ribosomal protein bL21 family. As to quaternary structure, part of the 50S ribosomal subunit. Contacts protein L20.

Functionally, this protein binds to 23S rRNA in the presence of protein L20. The protein is Large ribosomal subunit protein bL21 of Chelativorans sp. (strain BNC1).